Reading from the N-terminus, the 406-residue chain is uncharacterized protein (406 aa).

Over residues Ser136–Pro153 the composition is skewed to polar residues. A disordered region spans residues Ser136–Glu157.

This is an uncharacterized protein from Rattus norvegicus (Rat).